Consider the following 195-residue polypeptide: Archaetidylinositol phosphate synthase (195 aa).

2 helical membrane passes run 27–47 (IALP…AASA) and 54–74 (LITG…DGAV). The Mg(2+) site is built by Asp68, Asp71, Asp89, and Asp93. Asp93 acts as the Proton acceptor in catalysis. The next 2 helical transmembrane spans lie at 99–119 (IIII…LLAL) and 158–178 (LAGY…LAAL).

The protein belongs to the CDP-alcohol phosphatidyltransferase class-I family. The cofactor is Mn(2+). It depends on Mg(2+) as a cofactor.

It localises to the cell membrane. The enzyme catalyses CDP-2,3-bis-O-(phytanyl)-sn-glycerol + 1D-myo-inositol 3-phosphate = saturated 1-archaetidyl-1D-myo-inositol 3-phosphate + CMP + H(+). Its pathway is lipid metabolism; phospholipid metabolism. Functionally, catalyzes the formation of archaetidylinositol phosphate (AIP) from CDP-archaeol (CDP-ArOH or CDP-2,3-bis-(O-phytanyl)-sn-glycerol) and 1L-myo-inositol 1-phosphate (IP or 1D-myo-inositol 3-phosphate). AIP is a precursor of archaetidyl-myo-inositol (AI), an ether-type inositol phospholipid ubiquitously distributed in archaea membranes and essential for glycolipid biosynthesis in archaea. The polypeptide is Archaetidylinositol phosphate synthase (Methanothermobacter thermautotrophicus (strain ATCC 29096 / DSM 1053 / JCM 10044 / NBRC 100330 / Delta H) (Methanobacterium thermoautotrophicum)).